Consider the following 250-residue polypeptide: 3-deoxy-manno-octulosonate cytidylyltransferase (250 aa).

Belongs to the KdsB family.

The protein resides in the cytoplasm. It carries out the reaction 3-deoxy-alpha-D-manno-oct-2-ulosonate + CTP = CMP-3-deoxy-beta-D-manno-octulosonate + diphosphate. It functions in the pathway nucleotide-sugar biosynthesis; CMP-3-deoxy-D-manno-octulosonate biosynthesis; CMP-3-deoxy-D-manno-octulosonate from 3-deoxy-D-manno-octulosonate and CTP: step 1/1. The protein operates within bacterial outer membrane biogenesis; lipopolysaccharide biosynthesis. Its function is as follows. Activates KDO (a required 8-carbon sugar) for incorporation into bacterial lipopolysaccharide in Gram-negative bacteria. The sequence is that of 3-deoxy-manno-octulosonate cytidylyltransferase from Pectobacterium carotovorum subsp. carotovorum (strain PC1).